Consider the following 1223-residue polypeptide: Rho family-interacting cell polarization regulator 1 (1223 aa).

Position 22 is a phosphoserine (serine 22). Residues 83 to 112 (RGLTAYLEVHQQEQEKLQRQIKESKRNSRL) are a coiled coil. A phosphoserine mark is found at serine 345 and serine 347. The residue at position 351 (threonine 351) is a Phosphothreonine. The disordered stretch occupies residues 371-411 (NGTAWSLSSESSDDSSSPQLSGTARHSTPKPLVQQPEPLPV). Low complexity-rich tracts occupy residues 376–391 (SLSS…PQLS) and 399–411 (PKPL…PLPV). Residues serine 451, serine 454, and serine 468 each carry the phosphoserine modification. Low complexity-rich tracts occupy residues 566–586 (TTIG…GSVP) and 595–655 (TPSP…TSPT). 2 disordered regions span residues 566-771 (TTIG…QHSE) and 856-887 (FLND…LDSS). Over residues 656–665 (QEAKMSTHTT) the composition is skewed to polar residues. Residues 673 to 688 (TTTSPISTTESPSPST) show a composition bias toward low complexity. Polar residues-rich tracts occupy residues 693-703 (ISSSSAESTGP) and 725-741 (ASCT…SKPL). Serine 748 carries the post-translational modification Phosphoserine. Over residues 748–767 (SPEQIPKSPSSSPSSSAPEP) the composition is skewed to low complexity. Over residues 858–867 (NDDEDEDNDG) the composition is skewed to acidic residues. A compositionally biased stretch (basic and acidic residues) spans 868–885 (PGDRHTSSPEVVAEDRLD). A phosphoserine mark is found at serine 874 and serine 875.

It belongs to the RIPOR family. Interacts (via N-terminus) with RHOA (GTP-bound form); this interaction links active RHOA to STK24 and STK26 kinases. Interacts with RHOB. Interacts with RHOC. Interacts (via C-terminus) with PDCD10; this interaction occurs in a Rho-independent manner. Interacts (via C-terminus) with STK24; this interaction occurs in a PDCD10-dependent and Rho-independent manner. Interacts (via C-terminus) with STK26; this interaction occurs in a PDCD10-dependent and Rho-independent manner. Interacts (via N-terminus) with 14-3-3 proteins; these interactions occur in a Rho-dependent manner. Expressed in the kidney exclusively by glomerular podocytes.

The protein resides in the cytoplasm. Its subcellular location is the golgi apparatus. Its function is as follows. Downstream effector protein for Rho-type small GTPases that plays a role in cell polarity and directional migration. Acts as an adapter protein, linking active Rho proteins to STK24 and STK26 kinases, and hence positively regulates Golgi reorientation in polarized cell migration upon Rho activation. Involved in the subcellular relocation of STK26 from the Golgi to cytoplasm punctae in a Rho- and PDCD10-dependent manner upon serum stimulation. The polypeptide is Rho family-interacting cell polarization regulator 1 (Mus musculus (Mouse)).